Consider the following 599-residue polypeptide: Nucleosomal histone kinase 1 (599 aa).

Residues 47–328 enclose the Protein kinase domain; that stretch reads WRIGPSIGVG…PDYDKCRSWF (282 aa). Residues 53–61 and Lys-77 each bind ATP; that span reads IGVGGFGEI. Asp-183 acts as the Proton acceptor in catalysis. Disordered regions lie at residues 340-507 and 532-599; these read NGDL…PQPR and RKKK…KYQG. A compositionally biased stretch (polar residues) spans 349 to 361; the sequence is PQTSSNNNLSPPG. Ser-376, Ser-381, Ser-382, Ser-388, and Ser-390 each carry phosphoserine. Over residues 435–448 the composition is skewed to basic and acidic residues; that stretch reads VKTEPKSTPRERAT. A Phosphoserine modification is found at Ser-483. Over residues 546–558 the composition is skewed to low complexity; sequence SRTPSSRSALASS. Phosphoserine occurs at positions 564 and 586. Position 589 is a phosphothreonine (Thr-589).

The protein belongs to the protein kinase superfamily. CK1 Ser/Thr protein kinase family. VRK subfamily. As to quaternary structure, may interact with Unc-89 (via protein kinase domain 1). Interacts with L(2)gl. Mg(2+) is required as a cofactor. Post-translationally, phosphorylated during mitosis and female meiosis. Expressed in ovaries (at protein level). Expressed in indirect flight muscle (IFM) (at protein level).

It is found in the cytoplasm. Its subcellular location is the nucleus. The protein localises to the chromosome. The protein resides in the myofibril. It localises to the sarcomere. It is found in the z line. Its subcellular location is the m line. It catalyses the reaction L-seryl-[protein] + ATP = O-phospho-L-seryl-[protein] + ADP + H(+). It carries out the reaction L-threonyl-[protein] + ATP = O-phospho-L-threonyl-[protein] + ADP + H(+). Functionally, serine/threonine-protein kinase involved in somatic mitosis and female meiosis. Required for spindle organization in mitosis, and for the establishment or maintenance of meiosis-specific chromosomal configurations, including the prophase I karyosome and the metaphase I spindle. Specifically phosphorylates nucleosomal H2A on 'Thr-119'. Required for the development and organization of indirect flight muscle sarcomeres by regulating the formation of M line and H zone and the correct assembly of thick and thin filaments in the sarcomere. The chain is Nucleosomal histone kinase 1 (ball) from Drosophila melanogaster (Fruit fly).